The sequence spans 210 residues: N-(5'-phosphoribosyl)anthranilate isomerase (210 aa).

This sequence belongs to the TrpF family.

It carries out the reaction N-(5-phospho-beta-D-ribosyl)anthranilate = 1-(2-carboxyphenylamino)-1-deoxy-D-ribulose 5-phosphate. Its pathway is amino-acid biosynthesis; L-tryptophan biosynthesis; L-tryptophan from chorismate: step 3/5. The polypeptide is N-(5'-phosphoribosyl)anthranilate isomerase (Staphylococcus aureus (strain Mu3 / ATCC 700698)).